Reading from the N-terminus, the 275-residue chain is Uridine-5'-phosphate dioxygenase (275 aa).

Fe cation is bound by residues His-105, Asp-107, and His-247.

Requires Fe(2+) as cofactor.

The catalysed reaction is UMP + 2-oxoglutarate + O2 = uridine-5'-aldehyde + succinate + phosphate + CO2. The protein operates within antibiotic biosynthesis. Its activity is regulated as follows. Enhanced by ascorbic acid and inhibited by Zn(2+). Its function is as follows. Dioxygenase involved in the biosynthesis of the capuramycin-type nucleoside antibiotic A-102395. Catalyzes the dephosphorylation and oxidation of UMP to generate uridine-5'-aldehyde. Can also use the alternative alpha-keto acids pyruvate and alpha-ketoadipate (2-oxoadipate), with very low efficiency. Cannot use alpha-ketobutyrate, alpha-ketovalerate and oxaloacetate. This Amycolatopsis sp protein is Uridine-5'-phosphate dioxygenase.